Consider the following 417-residue polypeptide: Imidazolonepropionase (417 aa).

Positions 77 and 79 each coordinate Fe(3+). Zn(2+)-binding residues include His-77 and His-79. 4-imidazolone-5-propanoate contacts are provided by Arg-86, Tyr-149, and His-182. Tyr-149 provides a ligand contact to N-formimidoyl-L-glutamate. Residue His-247 participates in Fe(3+) binding. His-247 is a binding site for Zn(2+). Gln-250 serves as a coordination point for 4-imidazolone-5-propanoate. Asp-322 is a binding site for Fe(3+). Zn(2+) is bound at residue Asp-322. N-formimidoyl-L-glutamate-binding residues include Asn-324 and Gly-326. A 4-imidazolone-5-propanoate-binding site is contributed by Thr-327.

It belongs to the metallo-dependent hydrolases superfamily. HutI family. Zn(2+) is required as a cofactor. Requires Fe(3+) as cofactor.

It localises to the cytoplasm. It carries out the reaction 4-imidazolone-5-propanoate + H2O = N-formimidoyl-L-glutamate. The protein operates within amino-acid degradation; L-histidine degradation into L-glutamate; N-formimidoyl-L-glutamate from L-histidine: step 3/3. In terms of biological role, catalyzes the hydrolytic cleavage of the carbon-nitrogen bond in imidazolone-5-propanoate to yield N-formimidoyl-L-glutamate. It is the third step in the universal histidine degradation pathway. This is Imidazolonepropionase from Cupriavidus taiwanensis (strain DSM 17343 / BCRC 17206 / CCUG 44338 / CIP 107171 / LMG 19424 / R1) (Ralstonia taiwanensis (strain LMG 19424)).